A 334-amino-acid polypeptide reads, in one-letter code: MNERMVDQSMHSEETDFELSLRPTRLRQYIGQNSIKSNLEVFIKAAKLRHEPLDHVLLFGPPGLGKTTLSNIIANEMEVNIRTVSGPSLERPGDLAAILSGLQPGDVLFIDEIHRLSSVVEEVLYPAMEDFFLDIIIGKGDEARSIRIDLPPFTLVGATTRAGSLTGPLRDRFGVHLRLEYYNESDLKEIIIRTAEVLGTGIDEESAIELAKRSRGTPRVANRLLKRVRDFQQVNEDEQIYIETTKHALGLLQVDQHGLDYIDHKMMNCIIKQYNGGPVGLDTIAVTIGEERITIEDVYEPFLIQKGFLERTPRGRKATPLAYEHFAKSNEERE.

The tract at residues 1-182 (MNERMVDQSM…FGVHLRLEYY (182 aa)) is large ATPase domain (RuvB-L). ATP contacts are provided by residues L21, R22, G63, K66, T67, T68, 129–131 (EDF), R172, Y182, and R219. Position 67 (T67) interacts with Mg(2+). The small ATPAse domain (RuvB-S) stretch occupies residues 183–253 (NESDLKEIII…TTKHALGLLQ (71 aa)). Residues 256–334 (QHGLDYIDHK…HFAKSNEERE (79 aa)) form a head domain (RuvB-H) region. Residues R292, R311, and R316 each coordinate DNA.

This sequence belongs to the RuvB family. Homohexamer. Forms an RuvA(8)-RuvB(12)-Holliday junction (HJ) complex. HJ DNA is sandwiched between 2 RuvA tetramers; dsDNA enters through RuvA and exits via RuvB. An RuvB hexamer assembles on each DNA strand where it exits the tetramer. Each RuvB hexamer is contacted by two RuvA subunits (via domain III) on 2 adjacent RuvB subunits; this complex drives branch migration. In the full resolvosome a probable DNA-RuvA(4)-RuvB(12)-RuvC(2) complex forms which resolves the HJ.

The protein localises to the cytoplasm. The catalysed reaction is ATP + H2O = ADP + phosphate + H(+). Functionally, the RuvA-RuvB-RuvC complex processes Holliday junction (HJ) DNA during genetic recombination and DNA repair, while the RuvA-RuvB complex plays an important role in the rescue of blocked DNA replication forks via replication fork reversal (RFR). RuvA specifically binds to HJ cruciform DNA, conferring on it an open structure. The RuvB hexamer acts as an ATP-dependent pump, pulling dsDNA into and through the RuvAB complex. RuvB forms 2 homohexamers on either side of HJ DNA bound by 1 or 2 RuvA tetramers; 4 subunits per hexamer contact DNA at a time. Coordinated motions by a converter formed by DNA-disengaged RuvB subunits stimulates ATP hydrolysis and nucleotide exchange. Immobilization of the converter enables RuvB to convert the ATP-contained energy into a lever motion, pulling 2 nucleotides of DNA out of the RuvA tetramer per ATP hydrolyzed, thus driving DNA branch migration. The RuvB motors rotate together with the DNA substrate, which together with the progressing nucleotide cycle form the mechanistic basis for DNA recombination by continuous HJ branch migration. Branch migration allows RuvC to scan DNA until it finds its consensus sequence, where it cleaves and resolves cruciform DNA. The sequence is that of Holliday junction branch migration complex subunit RuvB from Staphylococcus aureus (strain MRSA252).